The primary structure comprises 635 residues: ADP-ribosylation factor-binding protein GGA1 (635 aa).

An N-acetylmethionine modification is found at methionine 1. In terms of domain architecture, VHS spans alanine 17–serine 147. Residues lysine 114–aspartate 273 form an interaction with ARF3 region. In terms of domain architecture, GAT spans aspartate 171–arginine 298. A Phosphoserine modification is found at serine 185. Residues glycine 299–proline 505 are unstructured hinge. The disordered stretch occupies residues aspartate 305 to leucine 349. The span at glycine 313 to aspartate 325 shows a compositional bias: low complexity. Phosphoserine is present on serine 354. The Autoinhibitory signature appears at aspartate 357–methionine 361. 2 disordered regions span residues serine 362 to leucine 422 and arginine 455 to glutamate 490. A compositionally biased stretch (polar residues) spans asparagine 383–serine 393. Serine 417 is modified (phosphoserine). Low complexity predominate over residues serine 459–serine 476. A compositionally biased stretch (pro residues) spans proline 477–alanine 486. The region spanning serine 506–proline 627 is the GAE domain.

The protein belongs to the GGA protein family. As to quaternary structure, monomer. Interacts with GGA2 and GGA3. Binds to clathrin and activated ARFs, including ARF1, ARF5 and ARF6. Interacts with RABEP1 and RABGEF1. Interacts with the type-I membrane proteins LRP3, M6PR/CD-MPR and IGF2R/CI-MPR. Interacts (via N-terminal VHS domain) with SORL1/sorLA and SORT1 (via C-terminal cytosolic domain). Interacts with EPN4. Interacts with CCDC91. Interacts with HEATR5B/p200a. Interacts with SYNRG/gamma-synergin. Interacts (via GAE doamin) with NECAP1 and NECAP2. Interacts (via GAE domain) with AFTPH/aftiphilin. Interacts with TSG101 and UBC. Interacts with RNF11. Interacts (via VHS domain) with BACE1 (via DXXLL motif); the interaction highly increases when BACE1 is phosphorylated at 'Ser-498'. Interacts with CNST. Interacts with ADRA2B. Interacts with ARL3; the interaction recruits, in collaboration with RABEP1, PKD1:PKD2 complex to trans-Golgi network and is required for ciliary targeting. In terms of processing, phosphorylated by CK2 and dephosphorylated by PP2A. Phosphorylation of GGA1 allows the internal DXXLL motif to bind the VHS domain and to inhibit the recognition of cargo signals. Ubiquitinated.

Its subcellular location is the golgi apparatus. It is found in the trans-Golgi network membrane. The protein localises to the endosome membrane. It localises to the early endosome membrane. Plays a role in protein sorting and trafficking between the trans-Golgi network (TGN) and endosomes. Mediates the ARF-dependent recruitment of clathrin to the TGN and binds ubiquitinated proteins and membrane cargo molecules with a cytosolic acidic cluster-dileucine (DXXLL) motif. Mediates export of the GPCR receptor ADRA2B to the cell surface. Required for targeting PKD1:PKD2 complex from the trans-Golgi network to the cilium membrane. Regulates retrograde transport of proteins such as phosphorylated form of BACE1 from endosomes to the trans-Golgi network. This Mus musculus (Mouse) protein is ADP-ribosylation factor-binding protein GGA1 (Gga1).